Here is a 1358-residue protein sequence, read N- to C-terminus: DNA-directed RNA polymerase subunit beta (1358 aa).

It belongs to the RNA polymerase beta chain family. The RNAP catalytic core consists of 2 alpha, 1 beta, 1 beta' and 1 omega subunit. When a sigma factor is associated with the core the holoenzyme is formed, which can initiate transcription.

It carries out the reaction RNA(n) + a ribonucleoside 5'-triphosphate = RNA(n+1) + diphosphate. DNA-dependent RNA polymerase catalyzes the transcription of DNA into RNA using the four ribonucleoside triphosphates as substrates. The protein is DNA-directed RNA polymerase subunit beta of Azotobacter vinelandii (strain DJ / ATCC BAA-1303).